A 154-amino-acid polypeptide reads, in one-letter code: Aspartate carbamoyltransferase regulatory chain (154 aa).

Positions 109, 114, 138, and 141 each coordinate Zn(2+).

It belongs to the PyrI family. In terms of assembly, contains catalytic and regulatory chains. It depends on Zn(2+) as a cofactor.

In terms of biological role, involved in allosteric regulation of aspartate carbamoyltransferase. The polypeptide is Aspartate carbamoyltransferase regulatory chain (Methanothrix thermoacetophila (strain DSM 6194 / JCM 14653 / NBRC 101360 / PT) (Methanosaeta thermophila)).